A 426-amino-acid polypeptide reads, in one-letter code: Enolase (426 aa).

Q163 provides a ligand contact to (2R)-2-phosphoglycerate. E205 functions as the Proton donor in the catalytic mechanism. Mg(2+) is bound by residues D242, E283, and D310. The (2R)-2-phosphoglycerate site is built by K335, R364, S365, and K386. The active-site Proton acceptor is the K335.

This sequence belongs to the enolase family. The cofactor is Mg(2+).

Its subcellular location is the cytoplasm. The protein localises to the secreted. The protein resides in the cell surface. The catalysed reaction is (2R)-2-phosphoglycerate = phosphoenolpyruvate + H2O. It participates in carbohydrate degradation; glycolysis; pyruvate from D-glyceraldehyde 3-phosphate: step 4/5. In terms of biological role, catalyzes the reversible conversion of 2-phosphoglycerate (2-PG) into phosphoenolpyruvate (PEP). It is essential for the degradation of carbohydrates via glycolysis. This is Enolase from Paenarthrobacter aurescens (strain TC1).